The following is a 108-amino-acid chain: Small ribosomal subunit protein bS6 (108 aa).

This sequence belongs to the bacterial ribosomal protein bS6 family.

In terms of biological role, binds together with bS18 to 16S ribosomal RNA. This is Small ribosomal subunit protein bS6 from Dichelobacter nodosus (strain VCS1703A).